Here is a 94-residue protein sequence, read N- to C-terminus: C-C motif chemokine 17 (94 aa).

The signal sequence occupies residues 1–23; sequence MAPLKMLALVILLLGASLQHIHA. Intrachain disulfides connect Cys-33–Cys-57 and Cys-34–Cys-73.

It belongs to the intercrine beta (chemokine CC) family.

It is found in the secreted. Chemokine, which displays chemotactic activity for T lymphocytes, preferentially Th2 cells, but not monocytes or granulocytes. Therefore plays an important role in a wide range of inflammatory and immunological processes. Acts by binding to CCR4 at T-cell surface. Mediates GM-CSF/CSF2-driven pain and inflammation. In the brain, required to maintain the typical, highly branched morphology of hippocampal microglia under homeostatic conditions. May be important for the appropriate adaptation of microglial morphology and synaptic plasticity to acute lipopolysaccharide (LPS)-induced neuroinflammation. Plays a role in wound healing, mainly by inducing fibroblast migration into the wound. The protein is C-C motif chemokine 17 (CCL17) of Macaca mulatta (Rhesus macaque).